A 142-amino-acid chain; its full sequence is Small heat shock protein IbpB (142 aa).

In terms of domain architecture, sHSP spans 26–137; it reads AGESQSFPPY…AAQRIAISER (112 aa).

This sequence belongs to the small heat shock protein (HSP20) family. In terms of assembly, homodimer. Forms homomultimers of about 100-150 subunits at optimal growth temperatures. Conformation changes to oligomers at high temperatures or high ionic concentrations. The decrease in size of the multimers is accompanied by an increase in chaperone activity.

It is found in the cytoplasm. Its function is as follows. Associates with aggregated proteins, together with IbpA, to stabilize and protect them from irreversible denaturation and extensive proteolysis during heat shock and oxidative stress. Aggregated proteins bound to the IbpAB complex are more efficiently refolded and reactivated by the ATP-dependent chaperone systems ClpB and DnaK/DnaJ/GrpE. Its activity is ATP-independent. The chain is Small heat shock protein IbpB from Escherichia coli O7:K1 (strain IAI39 / ExPEC).